The primary structure comprises 263 residues: Probable 6-oxopurine nucleoside phosphorylase (263 aa).

Phosphate is bound by residues T9, 49 to 50 (RH), and 82 to 83 (TA). M181 is a binding site for substrate. Residue T182 participates in phosphate binding. 205–207 (NYA) provides a ligand contact to substrate.

The protein belongs to the PNP/MTAP phosphorylase family. MTAP subfamily. Homohexamer. Dimer of a homotrimer.

It carries out the reaction a purine D-ribonucleoside + phosphate = a purine nucleobase + alpha-D-ribose 1-phosphate. It functions in the pathway purine metabolism; purine nucleoside salvage. In terms of biological role, purine nucleoside phosphorylase which is highly specific for 6-oxopurine nucleosides. Cleaves guanosine or inosine to respective bases and sugar-1-phosphate molecules. Involved in purine salvage. The chain is Probable 6-oxopurine nucleoside phosphorylase from Dictyoglomus turgidum (strain DSM 6724 / Z-1310).